A 485-amino-acid chain; its full sequence is Probable RNA-binding protein 46 (485 aa).

3 RRM domains span residues 61 to 139, 141 to 223, and 236 to 308; these read CEVF…VSLD, CRLF…WADP, and KVLY…LAKP.

As to quaternary structure, interacts with YTHDC2, MEIOC, MOV10, CNOT6L, DDX4, UPF1 and PABPC1.

The protein localises to the cytoplasm. Functionally, essential for male and female fertility, playing a crucial role in regulating germ cell development by ensuring the proper progression of meiosis prophase I. Regulates mitotic-to-meiotic transition in spermatogenesis by forming a complex with MEIOC and YTHDC2 which recognizes and down-regulates mitotic transcripts for a successful meiotic entry. Required for normal synaptonemal complex formation during meiosis, binding meiotic cohesin subunit mRNAs containing GCCUAU/GUUCGA motifs in their 3'UTRs regions and positively regulating their translation. Required for spermatogonial differentiation in both developing and adult testis. The sequence is that of Probable RNA-binding protein 46 (RBM46) from Macaca fascicularis (Crab-eating macaque).